A 254-amino-acid chain; its full sequence is 21S rRNA pseudouridine(2819) synthase (254 aa).

Asp-71 is an active-site residue.

Belongs to the pseudouridine synthase RluA family.

The protein localises to the mitochondrion. It catalyses the reaction uridine(2819) in 21S rRNA = pseudouridine(2819) in 21S rRNA. In terms of biological role, pseudouridylate synthase responsible for the pseudouridine-2819 formation in mitochondrial 21S rRNA. May modulate the efficiency or the fidelity of the mitochondrial translation machinery. This chain is 21S rRNA pseudouridine(2819) synthase (PUS5), found in Saccharomyces cerevisiae (strain ATCC 204508 / S288c) (Baker's yeast).